A 183-amino-acid chain; its full sequence is Ubiquitin-conjugating enzyme E2 H (183 aa).

The UBC core domain occupies 1–150 (MSSPSPGKRR…IKEYIQKYAT (150 aa)). Residue Lys-60 is modified to N6-acetyllysine. The Glycyl thioester intermediate role is filled by Cys-87. The segment at 152 to 183 (EALKEQEEGTGDSSSESSMSDFSEDEAQDMEL) is disordered. Positions 163 to 172 (DSSSESSMSD) are enriched in low complexity. A compositionally biased stretch (acidic residues) spans 173 to 183 (FSEDEAQDMEL).

The protein belongs to the ubiquitin-conjugating enzyme family. In terms of assembly, interacts with MAEA and WDR26, components of the CTLH complex that contains GID4, RANBP9 and/or RANBP10, MKLN1, MAEA, RMND5A (or alternatively its paralog RMND5B), GID8, ARMC8, WDR26 and YPEL5. Post-translationally, autoubiquitinated in vitro in the presence of NEDD4L.

It catalyses the reaction S-ubiquitinyl-[E1 ubiquitin-activating enzyme]-L-cysteine + [E2 ubiquitin-conjugating enzyme]-L-cysteine = [E1 ubiquitin-activating enzyme]-L-cysteine + S-ubiquitinyl-[E2 ubiquitin-conjugating enzyme]-L-cysteine.. The enzyme catalyses S-ubiquitinyl-[E1 ubiquitin-activating enzyme]-L-cysteine + [acceptor protein]-L-lysine = [E1 ubiquitin-activating enzyme]-L-cysteine + N(6)-monoubiquitinyl-[acceptor protein]-L-lysine.. It participates in protein modification; protein ubiquitination. Functionally, accepts ubiquitin from the E1 complex and catalyzes its covalent attachment to other proteins. E2 ubiquitin conjugating enzyme that transfers ubiquitin to MAEA, a core component of the CTLH E3 ubiquitin-protein ligase complex. In vitro catalyzes 'Lys-11'- and 'Lys-48'-linked polyubiquitination. Capable, in vitro, to ubiquitinate histone H2A. In Homo sapiens (Human), this protein is Ubiquitin-conjugating enzyme E2 H (UBE2H).